We begin with the raw amino-acid sequence, 341 residues long: Protein RecA, plasmid (341 aa).

Residue 80-87 participates in ATP binding; sequence GAESSGKT.

Belongs to the RecA family.

It is found in the cytoplasm. Can catalyze the hydrolysis of ATP in the presence of single-stranded DNA, the ATP-dependent uptake of single-stranded DNA by duplex DNA, and the ATP-dependent hybridization of homologous single-stranded DNAs. It interacts with LexA causing its activation and leading to its autocatalytic cleavage. The sequence is that of Protein RecA, plasmid from Lactococcus lactis subsp. lactis (Streptococcus lactis).